Reading from the N-terminus, the 93-residue chain is Small ribosomal subunit protein uS19c (93 aa).

Belongs to the universal ribosomal protein uS19 family.

It is found in the plastid. Its subcellular location is the chloroplast. Its function is as follows. Protein S19 forms a complex with S13 that binds strongly to the 16S ribosomal RNA. This is Small ribosomal subunit protein uS19c (rps19-A) from Zea mays (Maize).